The primary structure comprises 257 residues: 3-methyl-2-oxobutanoate hydroxymethyltransferase (257 aa).

Residues Asp-42 and Asp-86 each contribute to the Mg(2+) site. Residues 42 to 43 (DS), Asp-86, and Lys-116 each bind 3-methyl-2-oxobutanoate. A Mg(2+)-binding site is contributed by Glu-118. The active-site Proton acceptor is the Glu-185.

Belongs to the PanB family. As to quaternary structure, homodecamer; pentamer of dimers. Mg(2+) serves as cofactor.

The protein resides in the cytoplasm. The catalysed reaction is 3-methyl-2-oxobutanoate + (6R)-5,10-methylene-5,6,7,8-tetrahydrofolate + H2O = 2-dehydropantoate + (6S)-5,6,7,8-tetrahydrofolate. The protein operates within cofactor biosynthesis; (R)-pantothenate biosynthesis; (R)-pantoate from 3-methyl-2-oxobutanoate: step 1/2. Its function is as follows. Catalyzes the reversible reaction in which hydroxymethyl group from 5,10-methylenetetrahydrofolate is transferred onto alpha-ketoisovalerate to form ketopantoate. The chain is 3-methyl-2-oxobutanoate hydroxymethyltransferase from Prochlorococcus marinus (strain MIT 9301).